A 745-amino-acid chain; its full sequence is 1,4-alpha-glucan branching enzyme GlgB (745 aa).

The active-site Nucleophile is D416. The active-site Proton donor is the E469.

This sequence belongs to the glycosyl hydrolase 13 family. GlgB subfamily. In terms of assembly, monomer.

The catalysed reaction is Transfers a segment of a (1-&gt;4)-alpha-D-glucan chain to a primary hydroxy group in a similar glucan chain.. It functions in the pathway glycan biosynthesis; glycogen biosynthesis. In terms of biological role, catalyzes the formation of the alpha-1,6-glucosidic linkages in glycogen by scission of a 1,4-alpha-linked oligosaccharide from growing alpha-1,4-glucan chains and the subsequent attachment of the oligosaccharide to the alpha-1,6 position. In Shewanella sp. (strain W3-18-1), this protein is 1,4-alpha-glucan branching enzyme GlgB.